The chain runs to 130 residues: MNIIEQIDQEQMATLTGGKTIPDFAPGDTLQVNVKVVEGTRERLQAYEGVCIARAGGGINENFTVRKISYGEGVERVFPLYSPLVDSIKVVRKGRVRRAKLYYLRGLRGKAARITEKKQDKTRSQETGAA.

This sequence belongs to the bacterial ribosomal protein bL19 family.

Functionally, this protein is located at the 30S-50S ribosomal subunit interface and may play a role in the structure and function of the aminoacyl-tRNA binding site. The sequence is that of Large ribosomal subunit protein bL19 from Parvibaculum lavamentivorans (strain DS-1 / DSM 13023 / NCIMB 13966).